Here is a 444-residue protein sequence, read N- to C-terminus: Glycogen synthase (444 aa).

Arg15 is a binding site for ADP-alpha-D-glucose.

The protein belongs to the glycosyltransferase 1 family. Bacterial/plant glycogen synthase subfamily.

The catalysed reaction is [(1-&gt;4)-alpha-D-glucosyl](n) + ADP-alpha-D-glucose = [(1-&gt;4)-alpha-D-glucosyl](n+1) + ADP + H(+). Its pathway is glycan biosynthesis; glycogen biosynthesis. Functionally, synthesizes alpha-1,4-glucan chains using ADP-glucose. This chain is Glycogen synthase, found in Deinococcus radiodurans (strain ATCC 13939 / DSM 20539 / JCM 16871 / CCUG 27074 / LMG 4051 / NBRC 15346 / NCIMB 9279 / VKM B-1422 / R1).